A 337-amino-acid chain; its full sequence is Cathepsin L-like (337 aa).

Positions 1–18 are cleaved as a signal peptide; that stretch reads MNRFILLALVAAVVAVNS. Residues 19 to 119 constitute a propeptide, activation peptide; sequence AKLSRQIESA…SSFLAPFNVQ (101 aa). Asn108 is a glycosylation site (N-linked (GlcNAc...) asparagine). Cystine bridges form between Cys141–Cys184, Cys175–Cys217, and Cys276–Cys326. Residue Cys144 is part of the active site. Catalysis depends on residues His283 and Asn304.

The protein belongs to the peptidase C1 family. Expressed in intestine, pharynx posterior bulb, hypodermis and cuticle (at protein level). Expressed in germ cells, developing oocytes, sheath cells surrounding germ cells and oocytes, and in the eggshell (at protein level).

It is found in the secreted. Its subcellular location is the cytoplasmic granule. The protein resides in the lysosome. The protein localises to the endosome. It localises to the cytoplasmic vesicle. It is found in the phagosome. It carries out the reaction Specificity close to that of papain. As compared to cathepsin B, cathepsin L exhibits higher activity toward protein substrates, but has little activity on Z-Arg-Arg-NHMec, and no peptidyl-dipeptidase activity.. Its function is as follows. Cysteine protease which plays an essential role in the degradation of proteins in lysosomes. During early embryogenesis, maternally required for the proteolytic processing of yolk proteins in platelets, a lysosome-like structure where a slow and controlled degradation of yolk proteins occurs. In the gonad, required for the clearance of apoptotic germ cells in the engulfing cell phagolysosomes. In embryos, required for the degradation of endocytic and autophagic cargos. In embryos, may play a role in the degradation of lipid-containing droplets. Required for larval development. The protein is Cathepsin L-like of Caenorhabditis elegans.